Here is a 228-residue protein sequence, read N- to C-terminus: Lipoprotein-releasing system ATP-binding protein LolD (228 aa).

Residues 5 to 228 (LRCHQVCKTY…DGLLTDITGA (224 aa)) form the ABC transporter domain. 41-48 (GSSGSGKS) is a binding site for ATP.

The protein belongs to the ABC transporter superfamily. Lipoprotein translocase (TC 3.A.1.125) family. The complex is composed of two ATP-binding proteins (LolD) and two transmembrane proteins (LolC and LolE).

It localises to the cell inner membrane. Part of the ABC transporter complex LolCDE involved in the translocation of mature outer membrane-directed lipoproteins, from the inner membrane to the periplasmic chaperone, LolA. Responsible for the formation of the LolA-lipoprotein complex in an ATP-dependent manner. The polypeptide is Lipoprotein-releasing system ATP-binding protein LolD (Vibrio cholerae serotype O1 (strain ATCC 39315 / El Tor Inaba N16961)).